A 621-amino-acid chain; its full sequence is uncharacterized protein (621 aa).

2 disordered regions span residues Phe92–Gln134 and Lys268–Ile310. Over residues Asn94–Gln134 the composition is skewed to low complexity. Acidic residues predominate over residues Thr296–Ile310. Residues Ala354–Glu401 adopt a coiled-coil conformation.

This is an uncharacterized protein from Acanthamoeba polyphaga mimivirus (APMV).